The following is a 187-amino-acid chain: Putative manganese efflux pump MntP (187 aa).

6 helical membrane passes run 3-23 (MSATLILAFAMSMDAFAASIG), 41-61 (LIFGVIEAITPLIGWALGFFA), 62-82 (SQYILEWDHWVAFTLLLILGG), 107-129 (LLVCTAIATSLDAMAIGVGLAFL), 143-163 (ATMIMVTLGMMIGRYIGPILG), and 166-186 (AEIIGGLVLIGIGCNILYEHL).

The protein belongs to the MntP (TC 9.B.29) family.

Its subcellular location is the cell inner membrane. Its function is as follows. Probably functions as a manganese efflux pump. The sequence is that of Putative manganese efflux pump MntP from Pectobacterium atrosepticum (strain SCRI 1043 / ATCC BAA-672) (Erwinia carotovora subsp. atroseptica).